Consider the following 170-residue polypeptide: Ribosome maturation factor RimM (170 aa).

Residues His-97–Phe-170 enclose the PRC barrel domain.

Belongs to the RimM family. As to quaternary structure, binds ribosomal protein uS19.

It is found in the cytoplasm. An accessory protein needed during the final step in the assembly of 30S ribosomal subunit, possibly for assembly of the head region. Essential for efficient processing of 16S rRNA. May be needed both before and after RbfA during the maturation of 16S rRNA. It has affinity for free ribosomal 30S subunits but not for 70S ribosomes. This Xylella fastidiosa (strain M23) protein is Ribosome maturation factor RimM.